Here is a 174-residue protein sequence, read N- to C-terminus: uncharacterized protein (174 aa).

This is an uncharacterized protein from Methanocaldococcus jannaschii (strain ATCC 43067 / DSM 2661 / JAL-1 / JCM 10045 / NBRC 100440) (Methanococcus jannaschii).